A 447-amino-acid chain; its full sequence is NADH-quinone oxidoreductase subunit N (447 aa).

Transmembrane regions (helical) follow at residues 4 to 24 (FAALLPVILLGAGAVTAMLAA), 27 to 47 (LPGLARWIAGFALVAASVALA), 68 to 88 (LTGLVVCLSGIGSLAFLRPDG), 92 to 112 (EGPALLLLATLGGVVLTGAVH), 113 to 133 (AASLFLGLELITLALVALFVL), 146 to 166 (FLILGAAAAATLLMGLALGHA), 181 to 201 (ALLTFAAALLLAGLAFKLALV), 215 to 235 (PGAAAAFAGAASKVAVVTALV), 245 to 265 (VWALGLGTFAGVSILLGNLAA), 280 to 300 (VGHAGYIAAALATGAASAPAA), 302 to 322 (LFYIVTYAPALLAALCVAALI), 342 to 362 (GAAMAAALVSLAGLPVSAGFF), and 376 to 395 (AWALLALAIAGSALGAYYYL).

The protein belongs to the complex I subunit 2 family. As to quaternary structure, NDH-1 is composed of 14 different subunits. Subunits NuoA, H, J, K, L, M, N constitute the membrane sector of the complex.

The protein localises to the cell inner membrane. The catalysed reaction is a quinone + NADH + 5 H(+)(in) = a quinol + NAD(+) + 4 H(+)(out). Its function is as follows. NDH-1 shuttles electrons from NADH, via FMN and iron-sulfur (Fe-S) centers, to quinones in the respiratory chain. The immediate electron acceptor for the enzyme in this species is believed to be ubiquinone. Couples the redox reaction to proton translocation (for every two electrons transferred, four hydrogen ions are translocated across the cytoplasmic membrane), and thus conserves the redox energy in a proton gradient. The polypeptide is NADH-quinone oxidoreductase subunit N (Cereibacter sphaeroides (strain ATCC 17025 / ATH 2.4.3) (Rhodobacter sphaeroides)).